A 106-amino-acid polypeptide reads, in one-letter code: Large ribosomal subunit protein uL24 (106 aa).

This sequence belongs to the universal ribosomal protein uL24 family. As to quaternary structure, part of the 50S ribosomal subunit.

One of two assembly initiator proteins, it binds directly to the 5'-end of the 23S rRNA, where it nucleates assembly of the 50S subunit. Functionally, one of the proteins that surrounds the polypeptide exit tunnel on the outside of the subunit. The polypeptide is Large ribosomal subunit protein uL24 (Alkalilimnicola ehrlichii (strain ATCC BAA-1101 / DSM 17681 / MLHE-1)).